The following is a 426-amino-acid chain: Serine--tRNA ligase (426 aa).

230-232 (TAE) contacts L-serine. 261–263 (RSE) provides a ligand contact to ATP. Position 284 (glutamate 284) interacts with L-serine. Residue 348–351 (EISS) coordinates ATP. L-serine is bound at residue serine 384.

Belongs to the class-II aminoacyl-tRNA synthetase family. Type-1 seryl-tRNA synthetase subfamily. In terms of assembly, homodimer. The tRNA molecule binds across the dimer.

Its subcellular location is the cytoplasm. The enzyme catalyses tRNA(Ser) + L-serine + ATP = L-seryl-tRNA(Ser) + AMP + diphosphate + H(+). The catalysed reaction is tRNA(Sec) + L-serine + ATP = L-seryl-tRNA(Sec) + AMP + diphosphate + H(+). Its pathway is aminoacyl-tRNA biosynthesis; selenocysteinyl-tRNA(Sec) biosynthesis; L-seryl-tRNA(Sec) from L-serine and tRNA(Sec): step 1/1. Its function is as follows. Catalyzes the attachment of serine to tRNA(Ser). Is also able to aminoacylate tRNA(Sec) with serine, to form the misacylated tRNA L-seryl-tRNA(Sec), which will be further converted into selenocysteinyl-tRNA(Sec). This chain is Serine--tRNA ligase, found in Streptococcus mutans serotype c (strain ATCC 700610 / UA159).